The chain runs to 278 residues: MHRYVVIDAFASEPLQGNPVAVFFDCDDLSGERMQRMAREMNLSESTFVLRPQQDGDARIRIFTPVNELPFAGHPLLGTAIALGAETDKDRLFLETRMGTVPFALERQDGKVVACSMQQPIPTWEHFSRPAELLAALGLKGSTFPIEVYRNGPRHVFVGLESVAALSALHPDHRALCDFPDLAVNCFAGAGRHWRSRMFSPAYGVVEDAATGSAAGPLAIHLARHRQIPYGQQIEILQGVEIGRPSRMYARAEGAGERVSAVEVSGNGAAFAEGRAYL.

Glu-45 is an active-site residue.

It belongs to the PhzF family.

It carries out the reaction (5S,6S)-6-amino-5-hydroxycyclohexa-1,3-diene-1-carboxyate = (1R,6S)-6-amino-5-oxocyclohex-2-ene-1-carboxylate. It functions in the pathway secondary metabolite biosynthesis; pyocyanine biosynthesis. In terms of biological role, isomerase that catalyzes the condensation of two molecules of trans-2,3-dihydro-3-hydroxyanthranilic acid (DHHA) into the phenazine ring system. The final product is not yet known. The chain is Trans-2,3-dihydro-3-hydroxyanthranilate isomerase (phzF1) from Pseudomonas aeruginosa (strain ATCC 15692 / DSM 22644 / CIP 104116 / JCM 14847 / LMG 12228 / 1C / PRS 101 / PAO1).